A 165-amino-acid polypeptide reads, in one-letter code: Peptide deformylase (165 aa).

Fe cation contacts are provided by C93 and H135. E136 is an active-site residue. H139 is a binding site for Fe cation.

The protein belongs to the polypeptide deformylase family. Fe(2+) serves as cofactor.

The enzyme catalyses N-terminal N-formyl-L-methionyl-[peptide] + H2O = N-terminal L-methionyl-[peptide] + formate. Removes the formyl group from the N-terminal Met of newly synthesized proteins. Requires at least a dipeptide for an efficient rate of reaction. N-terminal L-methionine is a prerequisite for activity but the enzyme has broad specificity at other positions. The polypeptide is Peptide deformylase (Thermodesulfovibrio yellowstonii (strain ATCC 51303 / DSM 11347 / YP87)).